Here is a 172-residue protein sequence, read N- to C-terminus: Translation initiation factor IF-3 (172 aa).

It belongs to the IF-3 family. Monomer.

The protein localises to the cytoplasm. Its function is as follows. IF-3 binds to the 30S ribosomal subunit and shifts the equilibrium between 70S ribosomes and their 50S and 30S subunits in favor of the free subunits, thus enhancing the availability of 30S subunits on which protein synthesis initiation begins. This chain is Translation initiation factor IF-3, found in Campylobacter jejuni subsp. doylei (strain ATCC BAA-1458 / RM4099 / 269.97).